Here is a 503-residue protein sequence, read N- to C-terminus: MSEQNHPQTEPQLDENQIIALRREKLHNIRQQRNAYPNDFKRDSFAADLHAQYGEIGKEELDPQGIPVKVAGRMMLKRQMGKASFATIQDVSGQIQLYLNNKGVSQEVLDDFNHWDLGDIVGAEGTLFKTNHGELTVRVSGIRLLSKSLRPLPDKHKGLSDQETKYRQRYVDLIANEESRNTFIKRSQIIQSVRNFMVGEHYLEVETPMMHPIPGGATAKPFVTHHNALDIPLYLRIAPELYLKRLVVGGLERVFEINRSFRNEGMSVRHNPEFTMIEFYEAFSDYERMMQMAEDIIRNASHTVNGTANITYNGKEVDLESPFERLTILEAIKKYNPHYTDEQLNDAEWLKKEIVKHGESLPPSPGIGSLQLALFEGCAEGKLWNPTFIVDYPVEVSPLARASDTKQGLTERFELFVVGRELANGYSELNDPEDQAERFKAQVAQKDAGDDEAMHYDADYIRAMEFGLPPTGGCGIGIDRLVMLLTDSQTIRDVILFPQMRPE.

2 residues coordinate Mg(2+): glutamate 414 and glutamate 421.

Belongs to the class-II aminoacyl-tRNA synthetase family. In terms of assembly, homodimer. It depends on Mg(2+) as a cofactor.

The protein localises to the cytoplasm. The enzyme catalyses tRNA(Lys) + L-lysine + ATP = L-lysyl-tRNA(Lys) + AMP + diphosphate. The chain is Lysine--tRNA ligase from Neisseria meningitidis serogroup A / serotype 4A (strain DSM 15465 / Z2491).